We begin with the raw amino-acid sequence, 104 residues long: L-rhamnose mutarotase (104 aa).

Residue Y18 coordinates substrate. H22 (proton donor) is an active-site residue. Residues Y41 and 76 to 77 (WW) contribute to the substrate site.

This sequence belongs to the rhamnose mutarotase family. As to quaternary structure, homodimer.

It localises to the cytoplasm. The enzyme catalyses alpha-L-rhamnose = beta-L-rhamnose. Its pathway is carbohydrate metabolism; L-rhamnose metabolism. In terms of biological role, involved in the anomeric conversion of L-rhamnose. In Salmonella heidelberg (strain SL476), this protein is L-rhamnose mutarotase.